The following is a 180-amino-acid chain: Minor allergen Can f 2 (180 aa).

The first 18 residues, 1–18 (MQLLLLTVGLALICGLQA), serve as a signal peptide directing secretion. Asn45 carries an N-linked (GlcNAc...) asparagine glycan. A disulfide bridge connects residues Cys82 and Cys175.

Belongs to the calycin superfamily. Lipocalin family. Tongue epithelial tissue and parotid gland.

Its subcellular location is the secreted. The chain is Minor allergen Can f 2 from Canis lupus familiaris (Dog).